We begin with the raw amino-acid sequence, 303 residues long: GTPase Era (303 aa).

An Era-type G domain is found at 9–176 (KSGFVSIIGR…VEQIVEHMEE (168 aa)). The G1 stretch occupies residues 17 to 24 (GRPNVGKS). 17 to 24 (GRPNVGKS) serves as a coordination point for GTP. Residues 43 to 47 (QTTRN) are G2. The G3 stretch occupies residues 64–67 (DTPG). GTP contacts are provided by residues 64 to 68 (DTPGI) and 126 to 129 (NKID). Residues 126 to 129 (NKID) are G4. The segment at 155-157 (ISA) is G5. One can recognise a KH type-2 domain in the interval 199 to 284 (IREKVLHLTK…YLELWVKVQK (86 aa)).

This sequence belongs to the TRAFAC class TrmE-Era-EngA-EngB-Septin-like GTPase superfamily. Era GTPase family. In terms of assembly, monomer.

It localises to the cytoplasm. The protein resides in the cell membrane. An essential GTPase that binds both GDP and GTP, with rapid nucleotide exchange. Plays a role in 16S rRNA processing and 30S ribosomal subunit biogenesis and possibly also in cell cycle regulation and energy metabolism. The chain is GTPase Era from Shouchella clausii (strain KSM-K16) (Alkalihalobacillus clausii).